We begin with the raw amino-acid sequence, 515 residues long: Maturase K (515 aa).

Belongs to the intron maturase 2 family. MatK subfamily.

It is found in the plastid. Its subcellular location is the chloroplast. Usually encoded in the trnK tRNA gene intron. Probably assists in splicing its own and other chloroplast group II introns. In Pinus roxburghii (Chir pine), this protein is Maturase K.